The following is a 535-amino-acid chain: Pre-mRNA-splicing factor SLU7-A (535 aa).

The segment at 21-44 (EEARKAGLAPAEVDEDGKEINPHI) is disordered. Residues 96-109 (CQNCGAMTHTAKAC) form a CCHC-type zinc finger. Residues 176 to 190 (LKKLEEKNNNEKGDD) are compositionally biased toward basic and acidic residues. Disordered regions lie at residues 176–204 (LKKLEEKNNNEKGDDANSDGEEDEDDLRV) and 489–508 (EDLSRREEKDERKRKYNVKY). Acidic residues predominate over residues 191-203 (ANSDGEEDEDDLR). S193 is subject to Phosphoserine. The short motif at 486 to 493 (LKKEDLSR) is the Nuclear localization signal element. The span at 489–501 (EDLSRREEKDERK) shows a compositional bias: basic and acidic residues.

The protein belongs to the SLU7 family. As to expression, mainly expressed in tissues undergoing cell proliferation, particularly in lateral organs.

It localises to the nucleus. In terms of biological role, participates in the second catalytic step of pre-mRNA splicing, when the free hydroxyl group of exon I attacks the 3'-splice site to generate spliced mRNA and the excised lariat intron. Together with SMP2, involved in the timing of cell cycle arrest during leaf development, in a STRUWWELPETER (SWP) dependent manner; promotes cell proliferation in developing organs. The polypeptide is Pre-mRNA-splicing factor SLU7-A (Arabidopsis thaliana (Mouse-ear cress)).